A 1134-amino-acid polypeptide reads, in one-letter code: MQLSRRDFIKGLVAVGSASVFLAGYSETVDRLVKPRYTEVKPDSVGRIVHSACLGCNVRCGIRVNVVQRGGMEVVERISGNPYHVYNRYVSKEKQSRRYEPLPYNTPITEGLKYSGTLCARGEDGIHYLYDPYRIIVPLKRAGPRGSGKFKPITWEQLINEVVNGGVIEETGERLPGLKELFAYGILSEAGFDANAVLSEMKKDVDAIMEIAKDDTKSYGELTEAINNFKAKWSAKLGEKGLKLEDILIDPDRPDLGTKANQLVYMRGRGQGHADYFYQRWTYAFGSVNWLRHTSSCQLGYYAGNKIWSGYHDVQADPIGAKLLLMVGAQMGRLHPGATGQGLIVERAAEGELKVYYVNPTAPRTTANGNIVWVPIRPGTDAAFAMALLRVMFERGYYDAEFLSYANTDAARKAGYPLNTNASWLVIWEGDRKGEFLKGEDIGLGSDNPVVYAGSFVTNDSVEKAEIFFDGYVETKEGKRRVKSALQILKEECFSRSVEEWCEICGVDVAVIYEIAEEIRKAMPNCGTIVHRGAGMHTNGEYNVWALRCIDMLIGNIHRKGGLMTRASHTNYNKELYYVDKSKFGEPVRWGPPIDRHKVAYEDSLEYWMKKKRGENPYPAKRPWYPLTPEESYTEMFAGIAEEYPYPIKALIMYYANPVLSANFGVKFIEVLKDTSKLPLFIAITTSINETFLYADYIVPDTMYLETGTMGINYLYATSASVTLAEYWRSPAVMPMTQLVGTCPNGHPKYASMWEFLIDIALKLKMPGYGKGAVKGVGAYDGQKFDLYCAWEYIMYVFANAAMDAKKRGLIPETVSDEEVDFVEKNYPIARFKDIVPNEWRYVAYGLARGGVFTRYEDSFDERGYSKRKPWTDTVYFWSEKLAKARNSVTGEKFYGGPKYLPPATYAPLGTERRFYGTPLREIYPESQYPFLVVPPGSPLFTKHRSMFYYWLKQVMPENFAVINPEDAEKLGIESGDVIKIVTPTGELEVVAAVEPTVVKGTIAIPVGMGRWADSAVKKPAYFRLNDGSVAALVSELPDGASLPSDAVNPVKQLDETKKRILFTKSDRRYYDDLGIDSWRFSGVTPNVVACVDTSLDNWPLLSWIGAAQVYFFIPAKVEKTGKRKKFEMPNVWW.

Positions 1-31 form a signal peptide, tat-type signal; it reads MQLSRRDFIKGLVAVGSASVFLAGYSETVDR. Residues 46-133 form the 4Fe-4S Mo/W bis-MGD-type domain; that stretch reads GRIVHSACLG…DGIHYLYDPY (88 aa). 4 residues coordinate [4Fe-4S] cluster: cysteine 53, cysteine 56, cysteine 60, and cysteine 119.

Belongs to the prokaryotic molybdopterin-containing oxidoreductase family. As to quaternary structure, probably composed of three subunits: TtrA, TtrB and TtrC. Precursor interacts with TtrD. [4Fe-4S] cluster serves as cofactor. Mo-bis(molybdopterin guanine dinucleotide) is required as a cofactor. In terms of processing, exported by the Tat system. The position of the signal peptide cleavage has not been experimentally proven.

It is found in the cell membrane. In terms of biological role, part of a membrane-bound tetrathionate reductase that catalyzes the reduction of tetrathionate to thiosulfate. TtrA is the catalytic subunit. In Archaeoglobus fulgidus (strain ATCC 49558 / DSM 4304 / JCM 9628 / NBRC 100126 / VC-16), this protein is Tetrathionate reductase subunit A (ttrA).